We begin with the raw amino-acid sequence, 908 residues long: 26S proteasome non-ATPase regulatory subunit 2 (908 aa).

M1 is modified (N-acetylmethionine). The tract at residues 1 to 52 (MEEGGRDKAPLQPQQPPATSPGSGDEKPSGKERRDAGDKDKEQELSEEDKQL) is disordered. Residues 24–52 (GDEKPSGKERRDAGDKDKEQELSEEDKQL) show a composition bias toward basic and acidic residues. S29 and S147 each carry phosphoserine. The residue at position 194 (Y194) is a Phosphotyrosine. S361 and S363 each carry phosphoserine. 5 PC repeats span residues 409–442 (SAAA…YIKS), 443–479 (GALL…TMRL), 480–514 (GSIF…SMEV), 517–551 (VTAL…TELK), and 560–589 (LGLG…PFRS). N6-acetyllysine is present on K551. A compositionally biased stretch (basic and acidic residues) spans 623-643 (KEKEEDKDKKEKKDKDKKEAP). The tract at residues 623–645 (KEKEEDKDKKEKKDKDKKEAPAD) is disordered. 2 PC repeats span residues 692-723 (LALA…EVSY) and 742-757 (AAML…KDPN). A required for interaction with UBLCP1 region spans residues 708-903 (DTLSKFSHDA…LEGFVILRKN (196 aa)).

The protein belongs to the proteasome subunit S2 family. As to quaternary structure, component of the 19S proteasome regulatory particle complex. The 26S proteasome consists of a 20S core particle (CP) and two 19S regulatory subunits (RP). The regulatory particle is made of a lid composed of 9 subunits, a base containing 6 ATPases and few additional components including PSMD2. Interacts with RPGRIP1L. Interacts with CRY1 in a KDM8-dependent manner. Interacts (via C-terminus) with phosphatase UBLCP1 (via ubiquitin-like domain); the interaction recruits UBLCP1 to the 19S regulatory particle where it dephosphorylates 19S subunit PSMC2/RPT1 which impairs PSMC2 ATPase activity and disrupts 26S proteasome assembly.

Functionally, component of the 26S proteasome, a multiprotein complex involved in the ATP-dependent degradation of ubiquitinated proteins. This complex plays a key role in the maintenance of protein homeostasis by removing misfolded or damaged proteins, which could impair cellular functions, and by removing proteins whose functions are no longer required. Therefore, the proteasome participates in numerous cellular processes, including cell cycle progression, apoptosis, or DNA damage repair. Binds to the intracellular domain of tumor necrosis factor type 1 receptor. The binding domain of TRAP1 and TRAP2 resides outside the death domain of TNFR1. The protein is 26S proteasome non-ATPase regulatory subunit 2 (PSMD2) of Bos taurus (Bovine).